The following is a 495-amino-acid chain: Lysine--tRNA ligase (495 aa).

Positions 406 and 413 each coordinate Mg(2+).

This sequence belongs to the class-II aminoacyl-tRNA synthetase family. Homodimer. It depends on Mg(2+) as a cofactor.

It localises to the cytoplasm. The enzyme catalyses tRNA(Lys) + L-lysine + ATP = L-lysyl-tRNA(Lys) + AMP + diphosphate. The polypeptide is Lysine--tRNA ligase (Staphylococcus aureus (strain MW2)).